A 342-amino-acid chain; its full sequence is tRNA N6-adenosine threonylcarbamoyltransferase (342 aa).

Fe cation-binding residues include His111 and His115. Residues 133-137 (VVSGG), Asp166, Gly179, Asp183, and Asn273 contribute to the substrate site. Residue Asp301 coordinates Fe cation.

Belongs to the KAE1 / TsaD family. Fe(2+) serves as cofactor.

Its subcellular location is the cytoplasm. The catalysed reaction is L-threonylcarbamoyladenylate + adenosine(37) in tRNA = N(6)-L-threonylcarbamoyladenosine(37) in tRNA + AMP + H(+). Its function is as follows. Required for the formation of a threonylcarbamoyl group on adenosine at position 37 (t(6)A37) in tRNAs that read codons beginning with adenine. Is involved in the transfer of the threonylcarbamoyl moiety of threonylcarbamoyl-AMP (TC-AMP) to the N6 group of A37, together with TsaE and TsaB. TsaD likely plays a direct catalytic role in this reaction. The chain is tRNA N6-adenosine threonylcarbamoyltransferase from Trichlorobacter lovleyi (strain ATCC BAA-1151 / DSM 17278 / SZ) (Geobacter lovleyi).